A 406-amino-acid polypeptide reads, in one-letter code: 2,3-bisphosphoglycerate-independent phosphoglycerate mutase (406 aa).

Belongs to the BPG-independent phosphoglycerate mutase family. A-PGAM subfamily.

The catalysed reaction is (2R)-2-phosphoglycerate = (2R)-3-phosphoglycerate. It functions in the pathway carbohydrate degradation; glycolysis; pyruvate from D-glyceraldehyde 3-phosphate: step 3/5. Functionally, catalyzes the interconversion of 2-phosphoglycerate and 3-phosphoglycerate. The sequence is that of 2,3-bisphosphoglycerate-independent phosphoglycerate mutase from Methanococcus maripaludis (strain C5 / ATCC BAA-1333).